Here is a 1382-residue protein sequence, read N- to C-terminus: DNA-directed RNA polymerase subunit beta'' (1382 aa).

Residues Cys-224, Cys-294, Cys-301, and Cys-304 each contribute to the Zn(2+) site.

It belongs to the RNA polymerase beta' chain family. RpoC2 subfamily. As to quaternary structure, in plastids the minimal PEP RNA polymerase catalytic core is composed of four subunits: alpha, beta, beta', and beta''. When a (nuclear-encoded) sigma factor is associated with the core the holoenzyme is formed, which can initiate transcription. The cofactor is Zn(2+).

Its subcellular location is the plastid. The protein resides in the chloroplast. It carries out the reaction RNA(n) + a ribonucleoside 5'-triphosphate = RNA(n+1) + diphosphate. Its function is as follows. DNA-dependent RNA polymerase catalyzes the transcription of DNA into RNA using the four ribonucleoside triphosphates as substrates. This is DNA-directed RNA polymerase subunit beta'' from Liriodendron tulipifera (Tuliptree).